The following is a 400-amino-acid chain: Tryptophan synthase beta chain (400 aa).

The residue at position 92 (Lys92) is an N6-(pyridoxal phosphate)lysine.

The protein belongs to the TrpB family. Tetramer of two alpha and two beta chains. It depends on pyridoxal 5'-phosphate as a cofactor.

The catalysed reaction is (1S,2R)-1-C-(indol-3-yl)glycerol 3-phosphate + L-serine = D-glyceraldehyde 3-phosphate + L-tryptophan + H2O. The protein operates within amino-acid biosynthesis; L-tryptophan biosynthesis; L-tryptophan from chorismate: step 5/5. Functionally, the beta subunit is responsible for the synthesis of L-tryptophan from indole and L-serine. This is Tryptophan synthase beta chain from Neisseria meningitidis serogroup B (strain ATCC BAA-335 / MC58).